The chain runs to 162 residues: MLNQLENLTERVGGSNKLVDRWLDVRKHLLVAYYNLVGIKPGKESYMRLNEKALDDFCQSLVDYLSAGHFSIYERILHKLEGNGQLLHAAKIWPLLEDNTQRIMDYYDTSLETAIDHDNRLEFQQALSDIGEALEARFVLEDKLIMLVFDAMHDGARVKRPA.

Belongs to the Rsd/AlgQ family. As to quaternary structure, interacts with RpoD.

The protein resides in the cytoplasm. Functionally, binds RpoD and negatively regulates RpoD-mediated transcription activation by preventing the interaction between the primary sigma factor RpoD with the catalytic core of the RNA polymerase and with promoter DNA. May be involved in replacement of the RNA polymerase sigma subunit from RpoD to RpoS during the transition from exponential growth to the stationary phase. The chain is Regulator of sigma D from Salmonella paratyphi A (strain ATCC 9150 / SARB42).